Reading from the N-terminus, the 207-residue chain is dITP/XTP pyrophosphatase (207 aa).

A substrate-binding site is contributed by 7–12 (SNNAKK). D72 acts as the Proton acceptor in catalysis. D72 contacts Mg(2+). Residues S73, 155–158 (FGYD), K184, and 189–190 (HR) contribute to the substrate site.

Belongs to the HAM1 NTPase family. As to quaternary structure, homodimer. It depends on Mg(2+) as a cofactor.

It carries out the reaction XTP + H2O = XMP + diphosphate + H(+). The catalysed reaction is dITP + H2O = dIMP + diphosphate + H(+). It catalyses the reaction ITP + H2O = IMP + diphosphate + H(+). In terms of biological role, pyrophosphatase that catalyzes the hydrolysis of nucleoside triphosphates to their monophosphate derivatives, with a high preference for the non-canonical purine nucleotides XTP (xanthosine triphosphate), dITP (deoxyinosine triphosphate) and ITP. Seems to function as a house-cleaning enzyme that removes non-canonical purine nucleotides from the nucleotide pool, thus preventing their incorporation into DNA/RNA and avoiding chromosomal lesions. This chain is dITP/XTP pyrophosphatase, found in Corynebacterium efficiens (strain DSM 44549 / YS-314 / AJ 12310 / JCM 11189 / NBRC 100395).